The chain runs to 259 residues: Large ribosomal subunit protein eL8 (259 aa).

The interval M1 to N24 is disordered. 2 positions are modified to phosphoserine: S11 and S33.

It belongs to the eukaryotic ribosomal protein eL8 family. As to quaternary structure, component of the large ribosomal subunit (LSU). Mature yeast ribosomes consist of a small (40S) and a large (60S) subunit. The 40S small subunit contains 1 molecule of ribosomal RNA (18S rRNA) and at least 33 different proteins. The large 60S subunit contains 3 rRNA molecules (25S, 5.8S and 5S rRNA) and at least 46 different proteins.

It is found in the cytoplasm. Functionally, component of the ribosome, a large ribonucleoprotein complex responsible for the synthesis of proteins in the cell. The small ribosomal subunit (SSU) binds messenger RNAs (mRNAs) and translates the encoded message by selecting cognate aminoacyl-transfer RNA (tRNA) molecules. The large subunit (LSU) contains the ribosomal catalytic site termed the peptidyl transferase center (PTC), which catalyzes the formation of peptide bonds, thereby polymerizing the amino acids delivered by tRNAs into a polypeptide chain. The nascent polypeptides leave the ribosome through a tunnel in the LSU and interact with protein factors that function in enzymatic processing, targeting, and the membrane insertion of nascent chains at the exit of the ribosomal tunnel. This chain is Large ribosomal subunit protein eL8 (rpl8), found in Schizosaccharomyces pombe (strain 972 / ATCC 24843) (Fission yeast).